A 368-amino-acid chain; its full sequence is (Iso)eugenol O-methyltransferase (368 aa).

Positions 1–2 (MG) are excised as a propeptide. Residues Ser187, 211-212 (GG), Asp234, 254-255 (DM), and Lys268 each bind S-adenosyl-L-methionine. His272 (proton acceptor) is an active-site residue.

This sequence belongs to the class I-like SAM-binding methyltransferase superfamily. Cation-independent O-methyltransferase family. COMT subfamily. In terms of assembly, homodimer. As to expression, expressed in petals, style and stamens, but not in stigma, sepals, leaves or stem tissues.

The catalysed reaction is (E)-isoeugenol + S-adenosyl-L-methionine = (E)-isomethyleugenol + S-adenosyl-L-homocysteine + H(+). Its function is as follows. Catalyzes the methylation of the para-4-hydroxyl of both eugenol and (iso)eugenol to methyleugenol and isomethyleugenol, respectively. The resulting products are part of a complex mixture of low-molecular-weight volatile compounds emitted by the flowers to attract pollinators. This Clarkia breweri (Fairy fans) protein is (Iso)eugenol O-methyltransferase (IEMT1).